A 99-amino-acid polypeptide reads, in one-letter code: Integration host factor subunit alpha (99 aa).

Positions 49-75 (FGNFDLRDKNQRPGRNPKTGEDIPITA) are disordered.

Belongs to the bacterial histone-like protein family. In terms of assembly, heterodimer of an alpha and a beta chain.

In terms of biological role, this protein is one of the two subunits of integration host factor, a specific DNA-binding protein that functions in genetic recombination as well as in transcriptional and translational control. This chain is Integration host factor subunit alpha, found in Salmonella agona (strain SL483).